Consider the following 56-residue polypeptide: Small ribosomal subunit protein uS14 (56 aa).

Zn(2+) is bound by residues Cys21, Cys24, Cys39, and Cys42.

The protein belongs to the universal ribosomal protein uS14 family. In terms of assembly, component of the 40S small ribosomal subunit. Requires Zn(2+) as cofactor.

It localises to the cytoplasm. The protein localises to the cytosol. The protein resides in the rough endoplasmic reticulum. In Ixodes scapularis (Black-legged tick), this protein is Small ribosomal subunit protein uS14 (RpS29).